Consider the following 245-residue polypeptide: tRNA pseudouridine synthase A (245 aa).

Residue Asp52 is the Nucleophile of the active site. Tyr111 lines the substrate pocket.

The protein belongs to the tRNA pseudouridine synthase TruA family. Homodimer.

The enzyme catalyses uridine(38/39/40) in tRNA = pseudouridine(38/39/40) in tRNA. Its function is as follows. Formation of pseudouridine at positions 38, 39 and 40 in the anticodon stem and loop of transfer RNAs. The protein is tRNA pseudouridine synthase A of Rhodopseudomonas palustris (strain BisB18).